Consider the following 340-residue polypeptide: Acidic endochitinase WIN6 (340 aa).

An N-terminal signal peptide occupies residues 1–22 (MSVWALFAFFSLFLSLSVRGSA). A Chitin-binding type-1 domain is found at 23-63 (EQCGRQAGDALCPGGLCCSSYGWCGTTVDYCGIGCQSQCDG). 4 disulfides stabilise this stretch: Cys25–Cys40, Cys34–Cys46, Cys39–Cys53, and Cys57–Cys61. Positions 64-85 (GGGGDGGDDGCDGGDDGGGDGD) are spacer. The interval 86 to 340 (DGYLSDIIPK…YGLSGLKDTM (255 aa)) is chitinase. Disulfide bonds link Cys110/Cys172, Cys183/Cys191, and Cys290/Cys323. Glu154 serves as the catalytic Proton donor.

It belongs to the glycosyl hydrolase 19 family. Chitinase class I subfamily.

The enzyme catalyses Random endo-hydrolysis of N-acetyl-beta-D-glucosaminide (1-&gt;4)-beta-linkages in chitin and chitodextrins.. In terms of biological role, defense against chitin-containing fungal pathogens. The polypeptide is Acidic endochitinase WIN6 (WIN6) (Populus trichocarpa (Western balsam poplar)).